The following is a 368-amino-acid chain: MDSYEYGELLKELSTKRDNIAKIIKPDSIENRLGEIEALEHSEGFWNDATKAGEVQKEKRKLERILKKYEEANQAINDAKELFEIATQDNDEETLGLLFEESGHLEKEIKSVEIEVMLSGEHDGSNAIITIHPGAGGTESQDWASILYRMYLRWAERRGFKVEVLDYQEGEEAGIKDASFIIKGENAYGYLKVENGIHRLVRISPFDANAKRHTSFTSVMVSPEVDDDIDIEIEEKDLRLDTYRASGAGGQHVNKTESAIRITHIPTGIVVQCQNDRSQHKNKATAFKMLKSRLYELELAKRSAEYDSMEKSEIGWGHQIRSYVLAPYQQVKDTRSNIAYSNIEAILDGDLDELLEGVLISQFDQPGE.

The residue at position 251 (Gln-251) is an N5-methylglutamine.

Belongs to the prokaryotic/mitochondrial release factor family. Methylated by PrmC. Methylation increases the termination efficiency of RF2.

Its subcellular location is the cytoplasm. Peptide chain release factor 2 directs the termination of translation in response to the peptide chain termination codons UGA and UAA. The chain is Peptide chain release factor 2 from Wolinella succinogenes (strain ATCC 29543 / DSM 1740 / CCUG 13145 / JCM 31913 / LMG 7466 / NCTC 11488 / FDC 602W) (Vibrio succinogenes).